Reading from the N-terminus, the 376-residue chain is Carbapenem antibiotics biosynthesis protein CarD (376 aa).

This sequence belongs to the proline oxidase family.

It participates in antibiotic biosynthesis; carbapenem biosynthesis. The sequence is that of Carbapenem antibiotics biosynthesis protein CarD (carD) from Pectobacterium carotovorum subsp. carotovorum (Erwinia carotovora subsp. carotovora).